We begin with the raw amino-acid sequence, 347 residues long: Quinolinate synthase (347 aa).

Residues His-47 and Ser-68 each coordinate iminosuccinate. Cys-113 contributes to the [4Fe-4S] cluster binding site. Residues 139–141 and Ser-156 each bind iminosuccinate; that span reads YAN. Cys-200 contributes to the [4Fe-4S] cluster binding site. Iminosuccinate is bound by residues 226–228 and Thr-243; that span reads HPE. Cys-297 lines the [4Fe-4S] cluster pocket.

It belongs to the quinolinate synthase family. Type 1 subfamily. The cofactor is [4Fe-4S] cluster.

The protein localises to the cytoplasm. The enzyme catalyses iminosuccinate + dihydroxyacetone phosphate = quinolinate + phosphate + 2 H2O + H(+). It functions in the pathway cofactor biosynthesis; NAD(+) biosynthesis; quinolinate from iminoaspartate: step 1/1. Catalyzes the condensation of iminoaspartate with dihydroxyacetone phosphate to form quinolinate. In Escherichia coli O127:H6 (strain E2348/69 / EPEC), this protein is Quinolinate synthase.